The following is a 152-amino-acid chain: 3-hydroxyacyl-[acyl-carrier-protein] dehydratase FabZ (152 aa).

Histidine 57 is a catalytic residue.

The protein belongs to the thioester dehydratase family. FabZ subfamily.

It localises to the cytoplasm. The enzyme catalyses a (3R)-hydroxyacyl-[ACP] = a (2E)-enoyl-[ACP] + H2O. Functionally, involved in unsaturated fatty acids biosynthesis. Catalyzes the dehydration of short chain beta-hydroxyacyl-ACPs and long chain saturated and unsaturated beta-hydroxyacyl-ACPs. In Pasteurella multocida (strain Pm70), this protein is 3-hydroxyacyl-[acyl-carrier-protein] dehydratase FabZ.